The sequence spans 561 residues: uncharacterized protein (561 aa).

The next 2 helical transmembrane spans lie at 29-49 (FIFNVGSLTPTTAVLGVKKII) and 80-100 (FLFHTVGFFPIYTSSIGASII).

Its subcellular location is the cell membrane. This is an uncharacterized protein from Mycoplasma genitalium (strain ATCC 33530 / DSM 19775 / NCTC 10195 / G37) (Mycoplasmoides genitalium).